Consider the following 667-residue polypeptide: Putative L-type lectin-domain containing receptor kinase I.4 (667 aa).

An N-terminal signal peptide occupies residues 1-21; it reads MDCRLHLVLFFSCVCLICLSG. The Extracellular segment spans residues 22 to 294; it reads QQETGFVYNG…PREEKKKLHP (273 aa). Positions 24–257 are legume-lectin like; sequence ETGFVYNGFH…NQYILGWSFS (234 aa). 7 N-linked (GlcNAc...) asparagine glycosylation sites follow: Asn55, Asn110, Asn124, Asn128, Asn181, Asn204, and Asn225. The helical transmembrane segment at 295 to 315 threads the bilayer; it reads LLIGLVILLVIPVLMVLGGVY. Residues 316–667 are Cytoplasmic-facing; that stretch reads WYRRKKYAEV…THSILEGYGR (352 aa). Positions 350–625 constitute a Protein kinase domain; it reads FVKDALVGKG…QYLSQKQPLP (276 aa). Residues 356 to 364 and Lys378 contribute to the ATP site; that span reads VGKGGFGKV. Catalysis depends on Asp474, which acts as the Proton acceptor.

This sequence in the C-terminal section; belongs to the protein kinase superfamily. Ser/Thr protein kinase family. In the N-terminal section; belongs to the leguminous lectin family.

The protein localises to the cell membrane. It carries out the reaction L-seryl-[protein] + ATP = O-phospho-L-seryl-[protein] + ADP + H(+). The enzyme catalyses L-threonyl-[protein] + ATP = O-phospho-L-threonyl-[protein] + ADP + H(+). This Arabidopsis thaliana (Mouse-ear cress) protein is Putative L-type lectin-domain containing receptor kinase I.4 (LECRK14).